The chain runs to 193 residues: Interleukin-18 (193 aa).

The propeptide occupies 1 to 36; sequence MAAEQVEDYCISFVEMKFINNTLYFVAENDEDLESD.

It belongs to the IL-1 family. Forms a ternary complex with ligand-binding receptor subunit IL18R1 and signaling receptor subunit IL18RAP at the plasma membrane. Mature IL18 first binds to IL18R1 forming a low affinity binary complex, which then interacts with IL18RAP to form a high affinity ternary complex that signals inside the cell. Interacts with cargo receptor TMED10; the interaction mediates the translocation from the cytoplasm into the ERGIC (endoplasmic reticulum-Golgi intermediate compartment) and thereby secretion. Post-translationally, the pro-IL-18 precursor is processed by CASP1, CASP4 or CASP5 to yield its mature, active form. The pro-IL-18 precursor features autoinhibitory interactions between the propeptide and the post-cleavage-site region, preventing recognition by the IL18R1 receptor. Processing by CASP1, CASP4 or CASP5 induces conformational changes to generate critical receptor-binding sites. The mature form is then secreted and released in the extracellular milieu by passing through the gasdermin-D (GSDMD) pore. In contrast, cleavage by CASP3 inactivates IL18.

The protein localises to the cytoplasm. The protein resides in the cytosol. It is found in the secreted. Functionally, pro-inflammatory cytokine primarily involved in epithelial barrier repair, polarized T-helper 1 (Th1) cell and natural killer (NK) cell immune responses. Upon binding to IL18R1 and IL18RAP, forms a signaling ternary complex which activates NF-kappa-B, triggering synthesis of inflammatory mediators. Synergizes with IL12/interleukin-12 to induce IFNG synthesis from T-helper 1 (Th1) cells and natural killer (NK) cells. Involved in transduction of inflammation downstream of pyroptosis: its mature form is specifically released in the extracellular milieu by passing through the gasdermin-D (GSDMD) pore. This chain is Interleukin-18 (IL18), found in Bos taurus (Bovine).